The sequence spans 316 residues: tRNA-splicing endonuclease subunit Sen34 (316 aa).

Positions 120–184 (QAAKKQKLEQ…PGPSNGVTPL (65 aa)) are disordered. Polar residues-rich tracts occupy residues 144–159 (EATQGSETSDDGQPSA) and 168–181 (LDSSSPQPGPSNGV). Active-site residues include Y253, H261, and K292.

This sequence belongs to the tRNA-intron endonuclease family. As to quaternary structure, tRNA splicing endonuclease is a heterotetramer composed of TSEN2, TSEN15, TSEN34/LENG5 and TSEN54. tRNA splicing endonuclease complex also contains proteins of the pre-mRNA 3'-end processing machinery such as CLP1, CPSF1, CPSF4 and CSTF2.

It localises to the nucleus. It is found in the nucleolus. The enzyme catalyses pretRNA = a 3'-half-tRNA molecule with a 5'-OH end + a 5'-half-tRNA molecule with a 2',3'-cyclic phosphate end + an intron with a 2',3'-cyclic phosphate and a 5'-hydroxyl terminus.. Functionally, constitutes one of the two catalytic subunit of the tRNA-splicing endonuclease complex, a complex responsible for identification and cleavage of the splice sites in pre-tRNA. It cleaves pre-tRNA at the 5'- and 3'-splice sites to release the intron. The products are an intron and two tRNA half-molecules bearing 2',3'-cyclic phosphate and 5'-OH termini. There are no conserved sequences at the splice sites, but the intron is invariably located at the same site in the gene, placing the splice sites an invariant distance from the constant structural features of the tRNA body. The tRNA splicing endonuclease is also involved in mRNA processing via its association with pre-mRNA 3'-end processing factors, establishing a link between pre-tRNA splicing and pre-mRNA 3'-end formation, suggesting that the endonuclease subunits function in multiple RNA-processing events. This is tRNA-splicing endonuclease subunit Sen34 (Tsen34) from Mus musculus (Mouse).